Consider the following 198-residue polypeptide: Suppressor of cytokine signaling 2 (198 aa).

The interval 1–29 is disordered; sequence MTLRCLEPSGNGGEGTRSQWGTAGSAEEP. Residues 1 to 75 form an interaction with AREL1 region; that stretch reads MTLRCLEPSG…PEGTFLIRDS (75 aa). Ser-30 carries the post-translational modification Phosphoserine. The region spanning 48–156 is the SH2 domain; that stretch reads WYWGSMTVNE…TVHLYLTKPL (109 aa). Ser-52 is modified (phosphoserine; by PKC). In terms of domain architecture, SOCS box spans 151–197; that stretch reads YLTKPLYTSAPSLQHLCRLTINKCTGAIWGLPLPTRLKDYLEEYKFQ. Lys-173 is covalently cross-linked (Glycyl lysine isopeptide (Lys-Gly) (interchain with G-Cter in ubiquitin)).

In terms of assembly, substrate-recognition component of the ECS(SOCS2) complex, composed of SOCS2, CUL5, ELOB, ELOC and RNF7/RBX2. Interacts with IGF1R. Interacts with DCUN1D1. Ubiquitinated; mediated by AREL1 and leading to its subsequent proteasomal degradation. Ubiquitination is dependent on its phosphorylation at Ser-52, by PKC. Ubiquitination is stimulated by LPS. In terms of processing, phosphorylation at Ser-52 by PKC facilitates its ubiquitination and proteasomal degradation. High expression in heart, placenta, lung, kidney and prostate. Predominantly expressed in pulmonary epithelia cells, specifically type II pneumocytes.

Its subcellular location is the cytoplasm. It functions in the pathway protein modification; protein ubiquitination. With respect to regulation, substrate-binding is prevented by the covalent inhibitor MN551 that cross-links with Cys-111. Also inhibited by a MN551 derivative, MN714, which contains a pivaloyloxymethyl that allows cell permeability. Functionally, substrate-recognition component of a cullin-5-RING E3 ubiquitin-protein ligase complex (ECS complex, also named CRL5 complex), which mediates the ubiquitination and subsequent proteasomal degradation of target proteins, such as EPOR and GHR. Specifically recognizes and binds phosphorylated proteins via its SH2 domain, promoting their ubiquitination. The ECS(SOCS2) complex acts as a key regulator of growth hormone receptor (GHR) levels by mediating ubiquitination and degradation of GHR, following GHR phosphorylation by JAK2. The ECS(SOCS2) also catalyzes ubiquitination and degradation of JAK2-phosphorylated EPOR. This chain is Suppressor of cytokine signaling 2, found in Homo sapiens (Human).